The following is a 61-amino-acid chain: Overexpressed in colon carcinoma 1 protein homolog (61 aa).

Over residues 1 to 13 (MGCGNSTAASTTP) the composition is skewed to polar residues. Residues 1–61 (MGCGNSTAAS…AGQTASTHKE (61 aa)) are disordered. Basic and acidic residues predominate over residues 18-34 (SAKDVQDDSSMDEEKRR). A compositionally biased stretch (polar residues) spans 48-61 (TNETAGQTASTHKE).

Belongs to the OCC1 family.

The protein is Overexpressed in colon carcinoma 1 protein homolog (si:dkey-261e22.4) of Danio rerio (Zebrafish).